The sequence spans 157 residues: Ribosomal RNA large subunit methyltransferase H (157 aa).

Residues L73, G105, and 124 to 129 (LSKMTF) contribute to the S-adenosyl-L-methionine site.

Belongs to the RNA methyltransferase RlmH family. As to quaternary structure, homodimer.

It is found in the cytoplasm. It catalyses the reaction pseudouridine(1915) in 23S rRNA + S-adenosyl-L-methionine = N(3)-methylpseudouridine(1915) in 23S rRNA + S-adenosyl-L-homocysteine + H(+). In terms of biological role, specifically methylates the pseudouridine at position 1915 (m3Psi1915) in 23S rRNA. This Phocaeicola vulgatus (strain ATCC 8482 / DSM 1447 / JCM 5826 / CCUG 4940 / NBRC 14291 / NCTC 11154) (Bacteroides vulgatus) protein is Ribosomal RNA large subunit methyltransferase H.